The sequence spans 560 residues: Probable sulfate transporter MT1781 (560 aa).

The next 11 helical transmembrane spans lie at 29 to 49 (VLAG…YATV), 51 to 71 (GLPP…YALL), 79 to 99 (IGPE…MAAG), 105 to 125 (AVLA…AGTA), 138 to 158 (VLVG…LGTI), 184 to 204 (WPTF…TRWA), 207 to 227 (APGP…MSLD), 256 to 276 (ALII…VLTA), 333 to 353 (LIAL…LAMF), 355 to 375 (IAAL…LSEF), and 394 to 414 (AAVL…LSIL). Residues 442–557 (DYPQAKRVPG…MTLPTAVQAF (116 aa)) form the STAS domain.

Belongs to the SLC26A/SulP transporter (TC 2.A.53) family.

The protein localises to the cell membrane. The protein is Probable sulfate transporter MT1781 of Mycobacterium tuberculosis (strain CDC 1551 / Oshkosh).